The sequence spans 1244 residues: Mitotic chromosome and X-chromosome-associated protein mix-1 (1244 aa).

32–39 (GYNGSGKS) is a binding site for ATP. The stretch at 247-355 (VKKSAKEIED…AKRKEHEDSK (109 aa)) forms a coiled coil. The span at 337–355 (LSKDREVLDAKRKEHEDSK) shows a compositional bias: basic and acidic residues. The disordered stretch occupies residues 337-369 (LSKDREVLDAKRKEHEDSKAANSKDIQSQSDDE). Residues 356–365 (AANSKDIQSQ) show a composition bias toward polar residues. Residues 415 to 472 (ITAAKKRGERLHNQIKHLEGEKATLSARSKSDIGSADNYQKEVDEINKQLQLLGFNID) are a coiled coil. The 129-residue stretch at 526-654 (DVFGYVAHLI…DSLDVAREIA (129 aa)) folds into the SMC hinge domain. Coiled-coil stretches lie at residues 701–946 (PQIE…RKEA) and 975–1037 (YTVS…IATL). A compositionally biased stretch (basic and acidic residues) spans 919 to 932 (AKTKSKREEKEKEL). Residues 919–943 (AKTKSKREEKEKELTSLQQSEASNR) form a disordered region. The span at 1216–1232 (DAAAKKGAQKNDKEPPK) shows a compositional bias: basic and acidic residues. Positions 1216–1244 (DAAAKKGAQKNDKEPPKKKPIVVDDDDFE) are disordered.

Belongs to the SMC family. SMC2 subfamily. As to quaternary structure, component of the condensin I complex, which contains the mix-1/SMC2 and smc-4/SMC4 heterodimer, and three non SMC subunits that probably regulate the complex: dpy-26, capg-1 and dpy-28. Within the complex, interacts with smc-4, dpy-26, dpy-28 and capg-1. Interaction with smc-4 is required for mitotic chromosome localization. Component of the condensin II complex, which contains the mix-1/SMC2 and smc-4/SMC4 heterodimer, and three non SMC subunits, capg-2, kle-2 and hcp-6 that probably regulate the complex. Within the complex, interacts with smc-4, capg-2, kle-2 and hcp-6. Also a component of the condensin-like dosage compensation complex, which contains the mix-1/SMC2 and dpy-27/SMC4 heterodimer, and three non SMC subunits that probably regulate the complex: dpy-26, capg-1 and dpy-28. Within the complex, interacts with dpy-27, dpy-26, capg-1 and dpy-28. Requires capg-1 for hermaphrodite X chromosome localization. Interacts with smcl-1. Expressed in embryos and in adult somatic and germline tissues (at protein level).

It is found in the nucleus. The protein resides in the chromosome. In terms of biological role, essential protein required for both chromosome condensation and segregation and X-chromosome dosage compensation depending on its binding partners. Central component of the condensin I complex, a complex required for conversion of interphase chromatin into mitotic-like condense chromosomes. The condensin complex introduces positive supercoils into relaxed DNA in the presence of type I topoisomerases. Converts nicked DNA into positive knotted forms in the presence of type II topoisomerases. Central component of the condensin II complex, a complex that seems to play a role in prophase chromosome condensation and organization. Both the condensin complex I and II play a role in meiotic and mitotic chromosome segregation. Plays a role in robust cytokinesis upon the presence of chromatin obstructions. Also a member of the condensin I-like dosage compensation complex that associates specifically with hermaphrodite X chromosomes to reduce their gene transcription during interphase. This Caenorhabditis elegans protein is Mitotic chromosome and X-chromosome-associated protein mix-1 (mix-1).